A 312-amino-acid polypeptide reads, in one-letter code: Ribosomal protein uL3 glutamine methyltransferase (312 aa).

Belongs to the protein N5-glutamine methyltransferase family. PrmB subfamily.

The catalysed reaction is L-glutaminyl-[ribosomal protein uL3] + S-adenosyl-L-methionine = N(5)-methyl-L-glutaminyl-[ribosomal protein uL3] + S-adenosyl-L-homocysteine + H(+). Methylates large ribosomal subunit protein uL3 on a specific glutamine residue. The sequence is that of Ribosomal protein uL3 glutamine methyltransferase from Xylella fastidiosa (strain 9a5c).